The sequence spans 1578 residues: E3 ubiquitin-protein ligase HECW2 (1578 aa).

Position 48 is a phosphoserine (Ser48). A C2 domain is found at 171–298; sequence MEGGASGSLH…LERQAGDQML (128 aa). Disordered regions lie at residues 341–453 and 496–802; these read HTVN…FPTD and IDDG…PSVR. Polar residues predominate over residues 386–406; it reads RTSSTLEIDTEDLISTSSRNS. Basic and acidic residues predominate over residues 518–532; the sequence is ASIHETASLEERLEN. The span at 559-576 shows a compositional bias: polar residues; the sequence is SADQGSTELCSSQEVDQP. The span at 577 to 593 shows a compositional bias: low complexity; that stretch reads TSGADAGASDTSGGSRR. Composition is skewed to polar residues over residues 597 to 614, 643 to 664, and 688 to 708; these read ETES…SSET, SSCN…SSLE, and PTSS…SSLP. Low complexity-rich tracts occupy residues 721–735, 746–755, and 769–782; these read AAEA…ELGE, AAAAAPAAAA, and AQGA…QEEG. Positions 737 to 1074 are interaction with TP73; that stretch reads WQRRGSLEGA…PRPSSTFNTV (338 aa). Residues 813–846 enclose the WW 1 domain; that stretch reads EALPPNWEARIDSHGRIFYVDHVNRTTTWQRPTA. Positions 853–880 form a coiled coil; sequence LQRSNSIQQMEQLNRRYQSIRRTMTNER. Phosphoserine is present on residues Ser858 and Ser915. Positions 991-1024 constitute a WW 2 domain; sequence LELPRGWEMKHDHQGKAFFVDHNSRTTTFIDPRL. 2 disordered regions span residues 1030 to 1075 and 1167 to 1193; these read RPTS…NTVS and CQSP…RAPA. Positions 1037 to 1046 are enriched in basic residues; it reads HRQHLTRQRS. The segment covering 1167-1187 has biased composition (polar residues); sequence CQSPRGSPVSSPQNSPGTQRA. A Phosphoserine modification is found at Ser1181. Residues 1243–1578 enclose the HECT domain; it reads SRKDLQRNKL…VEETSTFGLE (336 aa). The active-site Glycyl thioester intermediate is the Cys1546.

Interacts with TP73. Interacts with FZR1.

The protein localises to the cytoplasm. The protein resides in the cytoskeleton. Its subcellular location is the spindle. The enzyme catalyses S-ubiquitinyl-[E2 ubiquitin-conjugating enzyme]-L-cysteine + [acceptor protein]-L-lysine = [E2 ubiquitin-conjugating enzyme]-L-cysteine + N(6)-ubiquitinyl-[acceptor protein]-L-lysine.. The protein operates within protein modification; protein ubiquitination. Functionally, E3 ubiquitin-protein ligase that mediates ubiquitination of TP73. Acts to stabilize TP73 and enhance activation of transcription by TP73. Involved in the regulation of mitotic metaphase/anaphase transition. The polypeptide is E3 ubiquitin-protein ligase HECW2 (Hecw2) (Mus musculus (Mouse)).